A 429-amino-acid chain; its full sequence is Phosphoribosylamine--glycine ligase (429 aa).

Positions 109–316 (KDFLARHKIP…LVELCLAACE (208 aa)) constitute an ATP-grasp domain. 135 to 196 (LREKGAPIVI…EEFLDGEEAS (62 aa)) contributes to the ATP binding site. Residues 212–236 (SQDHKRVGDKDTGPNTGGMGAYSPA) form a disordered region. Basic and acidic residues predominate over residues 213–223 (QDHKRVGDKDT). The Mg(2+) site is built by Glu-286 and Asn-288.

It belongs to the GARS family. As to quaternary structure, monomer. Mg(2+) serves as cofactor. The cofactor is Mn(2+).

It carries out the reaction 5-phospho-beta-D-ribosylamine + glycine + ATP = N(1)-(5-phospho-beta-D-ribosyl)glycinamide + ADP + phosphate + H(+). The protein operates within purine metabolism; IMP biosynthesis via de novo pathway; N(1)-(5-phospho-D-ribosyl)glycinamide from 5-phospho-alpha-D-ribose 1-diphosphate: step 2/2. Its function is as follows. Catalyzes the reversible conversion of phosphoribosylamine to glycinamide ribonucleotide, an enzymatic step in purine biosynthesis pathway. In Escherichia coli (strain K12), this protein is Phosphoribosylamine--glycine ligase (purD).